The sequence spans 810 residues: Valine--tRNA ligase (810 aa).

The 'HIGH' region motif lies at 45 to 55 (PTISGQLHIGH). The 'KMSKS' region motif lies at 534-538 (KMSKS). K537 contributes to the ATP binding site.

It belongs to the class-I aminoacyl-tRNA synthetase family. ValS type 2 subfamily. Monomer.

Its subcellular location is the cytoplasm. The catalysed reaction is tRNA(Val) + L-valine + ATP = L-valyl-tRNA(Val) + AMP + diphosphate. Catalyzes the attachment of valine to tRNA(Val). As ValRS can inadvertently accommodate and process structurally similar amino acids such as threonine, to avoid such errors, it has a 'posttransfer' editing activity that hydrolyzes mischarged Thr-tRNA(Val) in a tRNA-dependent manner. The protein is Valine--tRNA ligase of Ehrlichia ruminantium (strain Welgevonden).